The primary structure comprises 123 residues: MGFLHKLWDETVAGPTPDNGLGKLRKHDSLSTVRSSPPSLSSDQVTRSIMVTKGNNNVRGLRKLKMDPDSPTCSSSNPGTPLTPGTPCYALGPFTAGKIPSSGEDDAASLTTYEWIVINALDR.

Positions 7–86 (LWDETVAGPT…NPGTPLTPGT (80 aa)) are disordered. A compositionally biased stretch (low complexity) spans 30–46 (LSTVRSSPPSLSSDQVT). Polar residues-rich tracts occupy residues 47–58 (RSIMVTKGNNNV) and 71–80 (PTCSSSNPGT). S74 bears the Phosphoserine mark.

The protein belongs to the DRM1/ARP family.

The chain is Dormancy-associated protein homolog 4 from Arabidopsis thaliana (Mouse-ear cress).